Reading from the N-terminus, the 411-residue chain is Dual-specificity RNA methyltransferase RlmN (411 aa).

Glutamate 125 serves as the catalytic Proton acceptor. Residues 131–380 enclose the Radical SAM core domain; sequence EEGRGTLCIS…IRTPRGRDIL (250 aa). An intrachain disulfide couples cysteine 138 to cysteine 383. [4Fe-4S] cluster-binding residues include cysteine 145, cysteine 149, and cysteine 152. Residues 209-210, serine 241, 263-265, and asparagine 340 contribute to the S-adenosyl-L-methionine site; these read GE and SLH. The active-site S-methylcysteine intermediate is cysteine 383.

Belongs to the radical SAM superfamily. RlmN family. It depends on [4Fe-4S] cluster as a cofactor.

It localises to the cytoplasm. The enzyme catalyses adenosine(2503) in 23S rRNA + 2 reduced [2Fe-2S]-[ferredoxin] + 2 S-adenosyl-L-methionine = 2-methyladenosine(2503) in 23S rRNA + 5'-deoxyadenosine + L-methionine + 2 oxidized [2Fe-2S]-[ferredoxin] + S-adenosyl-L-homocysteine. It carries out the reaction adenosine(37) in tRNA + 2 reduced [2Fe-2S]-[ferredoxin] + 2 S-adenosyl-L-methionine = 2-methyladenosine(37) in tRNA + 5'-deoxyadenosine + L-methionine + 2 oxidized [2Fe-2S]-[ferredoxin] + S-adenosyl-L-homocysteine. Specifically methylates position 2 of adenine 2503 in 23S rRNA and position 2 of adenine 37 in tRNAs. m2A2503 modification seems to play a crucial role in the proofreading step occurring at the peptidyl transferase center and thus would serve to optimize ribosomal fidelity. In Brucella suis biovar 1 (strain 1330), this protein is Dual-specificity RNA methyltransferase RlmN.